We begin with the raw amino-acid sequence, 192 residues long: uncharacterized protein (192 aa).

This is an uncharacterized protein from Nostoc sp. (strain PCC 7120 / SAG 25.82 / UTEX 2576).